The following is a 357-amino-acid chain: Peptide chain release factor 1 (357 aa).

The residue at position 236 (glutamine 236) is an N5-methylglutamine.

It belongs to the prokaryotic/mitochondrial release factor family. In terms of processing, methylated by PrmC. Methylation increases the termination efficiency of RF1.

The protein localises to the cytoplasm. Peptide chain release factor 1 directs the termination of translation in response to the peptide chain termination codons UAG and UAA. In Mycolicibacterium gilvum (strain PYR-GCK) (Mycobacterium gilvum (strain PYR-GCK)), this protein is Peptide chain release factor 1.